The primary structure comprises 848 residues: Adenylate cyclase (848 aa).

Residues 1–535 form a catalytic region; sequence MYLYIETLKQ…DVSHHFPLRL (535 aa). The tract at residues 541 to 848 is regulatory; it reads KALYSPCEIR…DAPLLQQYFS (308 aa). Residue His-609 is modified to Phosphohistidine; by CRR.

Belongs to the adenylyl cyclase class-1 family.

The protein localises to the cytoplasm. It carries out the reaction ATP = 3',5'-cyclic AMP + diphosphate. This is Adenylate cyclase (cyaA) from Salmonella typhi.